A 428-amino-acid chain; its full sequence is Glutamyl-tRNA reductase (428 aa).

Residues 49–52, Ser109, 114–116, and Gln120 contribute to the substrate site; these read TCNR and EGQ. The Nucleophile role is filled by Cys50. 189 to 194 provides a ligand contact to NADP(+); that stretch reads GAGKMS.

The protein belongs to the glutamyl-tRNA reductase family. In terms of assembly, homodimer.

It carries out the reaction (S)-4-amino-5-oxopentanoate + tRNA(Glu) + NADP(+) = L-glutamyl-tRNA(Glu) + NADPH + H(+). Its pathway is porphyrin-containing compound metabolism; protoporphyrin-IX biosynthesis; 5-aminolevulinate from L-glutamyl-tRNA(Glu): step 1/2. It functions in the pathway porphyrin-containing compound metabolism; chlorophyll biosynthesis. In terms of biological role, catalyzes the NADPH-dependent reduction of glutamyl-tRNA(Glu) to glutamate 1-semialdehyde (GSA). This is Glutamyl-tRNA reductase from Microcystis aeruginosa (strain NIES-843 / IAM M-2473).